Reading from the N-terminus, the 229-residue chain is Cytochrome c oxidase subunit 2 (229 aa).

At methionine 1–histidine 26 the chain is on the mitochondrial intermembrane side. Residues alanine 27–asparagine 48 form a helical membrane-spanning segment. Over serine 49 to glutamate 62 the chain is Mitochondrial matrix. Residues methionine 63 to arginine 82 form a helical membrane-spanning segment. Over leucine 83–serine 229 the chain is Mitochondrial intermembrane. The Cu cation site is built by histidine 161, cysteine 196, glutamate 198, cysteine 200, histidine 204, and methionine 207. Glutamate 198 is a Mg(2+) binding site.

It belongs to the cytochrome c oxidase subunit 2 family. In terms of assembly, component of the cytochrome c oxidase (complex IV, CIV), a multisubunit enzyme composed of a catalytic core of 3 subunits and several supernumerary subunits. The complex exists as a monomer or a dimer and forms supercomplexes (SCs) in the inner mitochondrial membrane with ubiquinol-cytochrome c oxidoreductase (cytochrome b-c1 complex, complex III, CIII). It depends on Cu cation as a cofactor.

Its subcellular location is the mitochondrion inner membrane. The enzyme catalyses 4 Fe(II)-[cytochrome c] + O2 + 8 H(+)(in) = 4 Fe(III)-[cytochrome c] + 2 H2O + 4 H(+)(out). Functionally, component of the cytochrome c oxidase, the last enzyme in the mitochondrial electron transport chain which drives oxidative phosphorylation. The respiratory chain contains 3 multisubunit complexes succinate dehydrogenase (complex II, CII), ubiquinol-cytochrome c oxidoreductase (cytochrome b-c1 complex, complex III, CIII) and cytochrome c oxidase (complex IV, CIV), that cooperate to transfer electrons derived from NADH and succinate to molecular oxygen, creating an electrochemical gradient over the inner membrane that drives transmembrane transport and the ATP synthase. Cytochrome c oxidase is the component of the respiratory chain that catalyzes the reduction of oxygen to water. Electrons originating from reduced cytochrome c in the intermembrane space (IMS) are transferred via the dinuclear copper A center (CU(A)) of subunit 2 and heme A of subunit 1 to the active site in subunit 1, a binuclear center (BNC) formed by heme A3 and copper B (CU(B)). The BNC reduces molecular oxygen to 2 water molecules using 4 electrons from cytochrome c in the IMS and 4 protons from the mitochondrial matrix. The protein is Cytochrome c oxidase subunit 2 (mt:CoII) of Drosophila ambigua (Fruit fly).